A 237-amino-acid polypeptide reads, in one-letter code: Lipid A 1-diphosphate synthase (237 aa).

The Cytoplasmic segment spans residues 1 to 5 (MIKNL). A helical transmembrane segment spans residues 6-26 (PQIVLLNIVGLALFLSWYIPV). Residues 27 to 62 (NHGFWLPIDADIFYFFNQKLVESKAFLWLVALTNNR) are Periplasmic-facing. A helical membrane pass occupies residues 63–83 (AFDGCSLLAMGMLMLSFWLKE). Over 84–90 (NAPGRRR) the chain is Cytoplasmic. The chain crosses the membrane as a helical span at residues 91–111 (IVIIGLVMLLTAVVLNQLGQA). Over 112 to 145 (LIPVKRASPTLTFTDINRVSELLSVPTKDASRDS) the chain is Periplasmic. Residue Lys-167 is a topological domain, cytoplasmic. The chain crosses the membrane as a helical span at residues 168 to 188 (VAGLIALIIFVVFAFPRVMIG). Residues 189–194 (AHWFTD) lie on the Periplasmic side of the membrane. A helical transmembrane segment spans residues 195 to 215 (IIVGSMTVILIGLPWVLLTPL). Topologically, residues 216–237 (SDRLITFFDKSLPGKNKHFQNK) are cytoplasmic.

It belongs to the LpxT phosphotransferase family.

Its subcellular location is the cell inner membrane. It catalyses the reaction di-trans,octa-cis-undecaprenyl diphosphate + alpha-Kdo-(2-&gt;4)-alpha-Kdo-(2-&gt;6)-lipid A (E. coli) = (Kdo)2-lipid A 1-diphosphate + di-trans,octa-cis-undecaprenyl phosphate. Its pathway is bacterial outer membrane biogenesis; lipopolysaccharide biosynthesis. Inhibited by BasR. This regulation does not occur at the level of transcription, but rather following the assembly of LpxT into the inner membrane. Functionally, involved in the modification of the lipid A domain of lipopolysaccharides (LPS). Transfers a phosphate group from undecaprenyl pyrophosphate (C55-PP) to lipid A to form lipid A 1-diphosphate. Contributes to the recycling of undecaprenyl phosphate (C55-P). In vitro, has low undecaprenyl-diphosphate phosphatase activity. This is Lipid A 1-diphosphate synthase from Escherichia coli (strain K12).